A 115-amino-acid chain; its full sequence is Divalent-cation tolerance protein CutA (115 aa).

The Cu cation site is built by Cys19, His86, and His87.

It belongs to the CutA family. As to quaternary structure, homotrimer. Cu cation serves as cofactor.

The protein resides in the cytoplasm. In terms of biological role, involved in resistance toward heavy metals. This Citrobacter koseri (strain ATCC BAA-895 / CDC 4225-83 / SGSC4696) protein is Divalent-cation tolerance protein CutA.